We begin with the raw amino-acid sequence, 449 residues long: Tubulin beta-8 chain (449 aa).

GTP is bound by residues Q11, E69, S138, G142, T143, G144, N204, and N226. E69 lines the Mg(2+) pocket. The interval 428 to 449 (ATADEEEGYEYEEDEVEVQEEQ) is disordered. The segment covering 429–449 (TADEEEGYEYEEDEVEVQEEQ) has biased composition (acidic residues).

Belongs to the tubulin family. In terms of assembly, dimer of alpha and beta chains. A typical microtubule is a hollow water-filled tube with an outer diameter of 25 nm and an inner diameter of 15 nM. Alpha-beta heterodimers associate head-to-tail to form protofilaments running lengthwise along the microtubule wall with the beta-tubulin subunit facing the microtubule plus end conferring a structural polarity. Microtubules usually have 13 protofilaments but different protofilament numbers can be found in some organisms and specialized cells. Mg(2+) is required as a cofactor.

It is found in the cytoplasm. Its subcellular location is the cytoskeleton. Functionally, tubulin is the major constituent of microtubules, a cylinder consisting of laterally associated linear protofilaments composed of alpha- and beta-tubulin heterodimers. Microtubules grow by the addition of GTP-tubulin dimers to the microtubule end, where a stabilizing cap forms. Below the cap, tubulin dimers are in GDP-bound state, owing to GTPase activity of alpha-tubulin. This chain is Tubulin beta-8 chain (TUBB8), found in Arabidopsis thaliana (Mouse-ear cress).